Here is a 451-residue protein sequence, read N- to C-terminus: Tubulin beta-1 chain (451 aa).

GTP is bound by residues glutamine 11, glutamate 73, serine 142, glycine 146, threonine 147, glycine 148, asparagine 208, and asparagine 230. Glutamate 73 is a Mg(2+) binding site. The interval 430–451 (QEATADDEAEFEEEGEVEGEYA) is disordered. Residues 433 to 451 (TADDEAEFEEEGEVEGEYA) are compositionally biased toward acidic residues.

It belongs to the tubulin family. In terms of assembly, dimer of alpha and beta chains. A typical microtubule is a hollow water-filled tube with an outer diameter of 25 nm and an inner diameter of 15 nM. Alpha-beta heterodimers associate head-to-tail to form protofilaments running lengthwise along the microtubule wall with the beta-tubulin subunit facing the microtubule plus end conferring a structural polarity. Microtubules usually have 13 protofilaments but different protofilament numbers can be found in some organisms and specialized cells. The cofactor is Mg(2+).

It is found in the cytoplasm. Its subcellular location is the cytoskeleton. Its function is as follows. Tubulin is the major constituent of microtubules, a cylinder consisting of laterally associated linear protofilaments composed of alpha- and beta-tubulin heterodimers. Microtubules grow by the addition of GTP-tubulin dimers to the microtubule end, where a stabilizing cap forms. Below the cap, tubulin dimers are in GDP-bound state, owing to GTPase activity of alpha-tubulin. This Homarus americanus (American lobster) protein is Tubulin beta-1 chain.